The sequence spans 67 residues: Conotoxin TsMMSK-011 (67 aa).

The signal sequence occupies residues 1–22; that stretch reads MMSKLGVLLTICLLLFPLTVLP. Residues 23–50 constitute a propeptide that is removed on maturation; sequence MDGDQPADLPALRTQDIATDQSPWFDPV. 3 disulfide bridges follow: C53-C65, C54-C61, and C58-C64. P63 is subject to 4-hydroxyproline.

It belongs to the conotoxin M superfamily. As to expression, expressed by the venom duct.

The protein resides in the secreted. The polypeptide is Conotoxin TsMMSK-011 (Conus tessulatus (Tessellate cone)).